The primary structure comprises 358 residues: U5 small nuclear ribonucleoprotein 40 kDa protein (358 aa).

A Glycyl lysine isopeptide (Lys-Gly) (interchain with G-Cter in SUMO2) cross-link involves residue K18. An Asymmetric dimethylarginine modification is found at R21. WD repeat units lie at residues 65–104, 108–147, 150–190, 192–231, 234–273, 284–323, and 326–358; these read GHEG…DNYA, GHSG…RVKR, GHTS…AVQT, QNTY…LTYT, GHAD…PKER, NFEK…VLYK, and GHAG…GEIQ. K271 is covalently cross-linked (Glycyl lysine isopeptide (Lys-Gly) (interchain with G-Cter in SUMO2)).

In terms of assembly, component of the pre-catalytic and catalytic spliceosome complexes. Component of the postcatalytic spliceosome P complex. Part of the U5 snRNP complex. Interacts with PRPF8. Component of the U4/U6-U5 tri-snRNP complex composed of the U4, U6 and U5 snRNAs and at least PRPF3, PRPF4, PRPF6, PRPF8, PRPF31, SNRNP200, TXNL4A, WDR57, SNRNP40, DDX23, CD2BP2, PPIH, SNU13, EFTUD2, SART1 and USP39. Component of the minor spliceosome, which splices U12-type introns.

The protein localises to the nucleus. In terms of biological role, required for pre-mRNA splicing as component of the activated spliceosome. Component of the U5 small nuclear ribonucleoprotein (snRNP) complex and the U4/U6-U5 tri-snRNP complex, building blocks of the spliceosome. As a component of the minor spliceosome, involved in the splicing of U12-type introns in pre-mRNAs. The chain is U5 small nuclear ribonucleoprotein 40 kDa protein (Snrnp40) from Mus musculus (Mouse).